Reading from the N-terminus, the 107-residue chain is L-rhamnose mutarotase (107 aa).

Tyr21 lines the substrate pocket. The Proton donor role is filled by His25. Substrate is bound by residues Tyr44 and 79–80 (WW).

The protein belongs to the rhamnose mutarotase family. In terms of assembly, homodimer.

It is found in the cytoplasm. The enzyme catalyses alpha-L-rhamnose = beta-L-rhamnose. Its pathway is carbohydrate metabolism; L-rhamnose metabolism. In terms of biological role, involved in the anomeric conversion of L-rhamnose. The chain is L-rhamnose mutarotase from Agrobacterium fabrum (strain C58 / ATCC 33970) (Agrobacterium tumefaciens (strain C58)).